A 284-amino-acid polypeptide reads, in one-letter code: uncharacterized protein (284 aa).

The chain crosses the membrane as a helical span at residues 12–32 (ILFILFVVAFCVYLVPRVAIN).

This sequence belongs to the serine esterase family.

Its subcellular location is the membrane. This is an uncharacterized protein from Escherichia coli (strain K12).